The following is a 216-amino-acid chain: A-type ATP synthase subunit D (216 aa).

This sequence belongs to the V-ATPase D subunit family. In terms of assembly, has multiple subunits with at least A(3), B(3), C, D, E, F, H, I and proteolipid K(x). In terms of processing, the N-terminus is blocked.

It localises to the cell membrane. Component of the A-type ATP synthase that produces ATP from ADP in the presence of a proton gradient across the membrane. The polypeptide is A-type ATP synthase subunit D (Sulfurisphaera tokodaii (strain DSM 16993 / JCM 10545 / NBRC 100140 / 7) (Sulfolobus tokodaii)).